A 261-amino-acid chain; its full sequence is Calbindin (261 aa).

Residue Ala2 is modified to N-acetylalanine. The interaction with RANBP9 stretch occupies residues 2 to 7 (AESHLQ). EF-hand domains lie at 11–46 (ITAS…LLQA), 53–88 (ELSP…EENF), 98–133 (KSCE…LLEK), 142–177 (KLAE…QENF), and 186–221 (MCGK…LCEK). Ca(2+)-binding residues include Asp24, Asp26, Ser28, Tyr30, and Glu35. Ca(2+)-binding residues include Asp111, Asp113, Ser115, Glu122, Asp155, Asn157, Asp159, Lys161, Glu166, Asp199, Asp201, Asn203, Tyr205, and Glu210.

Belongs to the calbindin family. Interacts with RANBP9.

In terms of biological role, buffers cytosolic calcium. May stimulate a membrane Ca(2+)-ATPase and a 3',5'-cyclic nucleotide phosphodiesterase. The polypeptide is Calbindin (Calb1) (Rattus norvegicus (Rat)).